A 363-amino-acid chain; its full sequence is UDP-N-acetylglucosamine--N-acetylmuramyl-(pentapeptide) pyrophosphoryl-undecaprenol N-acetylglucosamine transferase (363 aa).

UDP-N-acetyl-alpha-D-glucosamine is bound by residues 12 to 14 (TAG), Arg-166, Ser-196, and Gln-291.

It belongs to the glycosyltransferase 28 family. MurG subfamily.

Its subcellular location is the cell inner membrane. It catalyses the reaction di-trans,octa-cis-undecaprenyl diphospho-N-acetyl-alpha-D-muramoyl-L-alanyl-D-glutamyl-meso-2,6-diaminopimeloyl-D-alanyl-D-alanine + UDP-N-acetyl-alpha-D-glucosamine = di-trans,octa-cis-undecaprenyl diphospho-[N-acetyl-alpha-D-glucosaminyl-(1-&gt;4)]-N-acetyl-alpha-D-muramoyl-L-alanyl-D-glutamyl-meso-2,6-diaminopimeloyl-D-alanyl-D-alanine + UDP + H(+). It functions in the pathway cell wall biogenesis; peptidoglycan biosynthesis. In terms of biological role, cell wall formation. Catalyzes the transfer of a GlcNAc subunit on undecaprenyl-pyrophosphoryl-MurNAc-pentapeptide (lipid intermediate I) to form undecaprenyl-pyrophosphoryl-MurNAc-(pentapeptide)GlcNAc (lipid intermediate II). The chain is UDP-N-acetylglucosamine--N-acetylmuramyl-(pentapeptide) pyrophosphoryl-undecaprenol N-acetylglucosamine transferase from Legionella pneumophila (strain Lens).